Reading from the N-terminus, the 206-residue chain is Oligoribonuclease (206 aa).

The Exonuclease domain occupies 20–183 (LVWLDMEMTG…ADIHESIDEL (164 aa)). The active site involves Tyr-141.

Belongs to the oligoribonuclease family.

Its subcellular location is the cytoplasm. Its function is as follows. 3'-to-5' exoribonuclease specific for small oligoribonucleotides. In Burkholderia ambifaria (strain ATCC BAA-244 / DSM 16087 / CCUG 44356 / LMG 19182 / AMMD) (Burkholderia cepacia (strain AMMD)), this protein is Oligoribonuclease.